The sequence spans 408 residues: Ribulose bisphosphate carboxylase/oxygenase activase, chloroplastic (408 aa).

The N-terminal 32 residues, 1–32 (MQVTMKSSAVSGQRVGGARVATRSVRRAQLQV), are a transit peptide targeting the chloroplast. 138–145 (GGKGQGKT) is an ATP binding site.

It belongs to the RuBisCO activase family. As to quaternary structure, monomer.

The protein localises to the plastid. The protein resides in the chloroplast stroma. Its function is as follows. Activation of RuBisCO (ribulose-1,5-bisphosphate carboxylase/oxygenase; EC 4.1.1.39) involves the ATP-dependent carboxylation of the epsilon-amino group of lysine leading to a carbamate structure. This Chlamydomonas reinhardtii (Chlamydomonas smithii) protein is Ribulose bisphosphate carboxylase/oxygenase activase, chloroplastic.